A 299-amino-acid polypeptide reads, in one-letter code: N-acetylmuramic acid 6-phosphate etherase (299 aa).

The 164-residue stretch at 54–217 folds into the SIS domain; that stretch reads TIAQYKKGGR…STITMVGVGK (164 aa). Residue Glu82 is the Proton donor of the active site. Glu113 is a catalytic residue.

It belongs to the GCKR-like family. MurNAc-6-P etherase subfamily. Homodimer.

The catalysed reaction is N-acetyl-D-muramate 6-phosphate + H2O = N-acetyl-D-glucosamine 6-phosphate + (R)-lactate. It participates in amino-sugar metabolism; N-acetylmuramate degradation. Specifically catalyzes the cleavage of the D-lactyl ether substituent of MurNAc 6-phosphate, producing GlcNAc 6-phosphate and D-lactate. This is N-acetylmuramic acid 6-phosphate etherase from Staphylococcus aureus (strain bovine RF122 / ET3-1).